Here is a 213-residue protein sequence, read N- to C-terminus: Small ribosomal subunit protein eS6 (213 aa).

The protein belongs to the eukaryotic ribosomal protein eS6 family.

This chain is Small ribosomal subunit protein eS6, found in Sulfolobus acidocaldarius (strain ATCC 33909 / DSM 639 / JCM 8929 / NBRC 15157 / NCIMB 11770).